The chain runs to 123 residues: Large ribosomal subunit protein uL14 (123 aa).

Belongs to the universal ribosomal protein uL14 family. Part of the 50S ribosomal subunit. Forms a cluster with proteins L3 and L19. In the 70S ribosome, L14 and L19 interact and together make contacts with the 16S rRNA in bridges B5 and B8.

Binds to 23S rRNA. Forms part of two intersubunit bridges in the 70S ribosome. The polypeptide is Large ribosomal subunit protein uL14 (Escherichia coli O6:K15:H31 (strain 536 / UPEC)).